A 312-amino-acid chain; its full sequence is Putative HTH-type transcriptional regulatory protein Ta1363 (312 aa).

The 54-residue stretch at 133–186 (LREMRMKMSLSIGYLSHYLGVSRRSVSLYENGSSATIDVFLKLQEIIKSDLVDH) folds into the HTH cro/C1-type domain. A DNA-binding region (H-T-H motif) is located at residues 144-163 (IGYLSHYLGVSRRSVSLYEN).

This is Putative HTH-type transcriptional regulatory protein Ta1363 from Thermoplasma acidophilum (strain ATCC 25905 / DSM 1728 / JCM 9062 / NBRC 15155 / AMRC-C165).